Here is a 550-residue protein sequence, read N- to C-terminus: Hydroxylamine reductase (550 aa).

4 residues coordinate [2Fe-2S] cluster: cysteine 3, cysteine 6, cysteine 18, and cysteine 25. Positions 249, 273, 317, 405, 433, 458, 492, and 494 each coordinate hybrid [4Fe-2O-2S] cluster. Cysteine 405 bears the Cysteine persulfide mark.

Belongs to the HCP family. The cofactor is [2Fe-2S] cluster. Requires hybrid [4Fe-2O-2S] cluster as cofactor.

It is found in the cytoplasm. The catalysed reaction is A + NH4(+) + H2O = hydroxylamine + AH2 + H(+). Catalyzes the reduction of hydroxylamine to form NH(3) and H(2)O. This Proteus mirabilis (strain HI4320) protein is Hydroxylamine reductase.